The primary structure comprises 225 residues: Immune-associated nucleotide-binding protein 1 (225 aa).

One can recognise an AIG1-type G domain in the interval 6–214; sequence CPVTNLLLLG…YTENMHRKIK (209 aa). The interval 15–22 is G1; that stretch reads GRSENGKS. 15 to 23 serves as a coordination point for GTP; sequence GRSENGKSS. Positions 42 to 46 are G2; it reads DMDQR. The G3 stretch occupies residues 64-67; sequence DTPG. Residues 134 to 137 are G4; the sequence is TGGD. Residues 173–175 form a G5 region; sequence NNK. N174 is a binding site for GTP.

Belongs to the TRAFAC class TrmE-Era-EngA-EngB-Septin-like GTPase superfamily. AIG1/Toc34/Toc159-like paraseptin GTPase family. IAN subfamily. Mostly expressed in pollen.

This Arabidopsis thaliana (Mouse-ear cress) protein is Immune-associated nucleotide-binding protein 1.